The primary structure comprises 1438 residues: Lysophospholipase NTE1 (1438 aa).

The Cytoplasmic segment spans residues 1 to 25; it reads MDSDTSSADFHSTETLVSTPKYSYG. Residues 26–46 traverse the membrane as a helical segment; it reads VLINVILLVSWTCFRVVNWFL. Over 47–64 the chain is Lumenal; it reads VTLPSILLGMLSKTFQIT. Residues 65–85 traverse the membrane as a helical segment; that stretch reads LSLSSILMFVVAVTAICFLVV. Residues 86–1438 are Cytoplasmic-facing; that stretch reads RYKYLTRYSR…HVSLSRRNSI (1353 aa). The segment covering 432 to 450 has biased composition (polar residues); that stretch reads YETQTIPNESEDSPTIQRS. Residues 432 to 464 form a disordered region; that stretch reads YETQTIPNESEDSPTIQRSSLRRRASHSTSLRK. A nucleoside 3',5'-cyclic phosphate-binding positions include 590–720 and 707–856; these read GDDS…LTID and RLKR…VANR. A PNPLA domain is found at 1131-1295; that stretch reads LVLGGGGSRG…LDNLPVSEMK (165 aa). The GXGXXG signature appears at 1135 to 1140; it reads GGGSRG. A GXSXG motif is present at residues 1162–1166; that stretch reads GTSIG. Residue Ser1164 is the Nucleophile of the active site. Asp1282 acts as the Proton acceptor in catalysis. A DGA/G motif is present at residues 1282-1284; sequence DGG.

This sequence belongs to the NTE family.

It is found in the endoplasmic reticulum membrane. The catalysed reaction is a 1-acyl-sn-glycero-3-phosphocholine + H2O = sn-glycerol 3-phosphocholine + a fatty acid + H(+). Its activity is regulated as follows. Inhibited by organophosphorus esters. Functionally, intracellular phospholipase B that catalyzes the double deacylation of phosphatidylcholine (PC) to glycerophosphocholine (GroPCho). Plays an important role in membrane lipid homeostasis. Responsible for the rapid PC turnover in response to inositol, elevated temperatures, or when choline is present in the growth medium. The polypeptide is Lysophospholipase NTE1 (NTE1) (Meyerozyma guilliermondii (strain ATCC 6260 / CBS 566 / DSM 6381 / JCM 1539 / NBRC 10279 / NRRL Y-324) (Yeast)).